A 281-amino-acid polypeptide reads, in one-letter code: NADPH-dependent 7-cyano-7-deazaguanine reductase (281 aa).

87 to 89 (IES) serves as a coordination point for substrate. Position 89-90 (89-90 (SK)) interacts with NADPH. The active-site Thioimide intermediate is the Cys188. The Proton donor role is filled by Asp195. 227–228 (HE) provides a ligand contact to substrate. 256–257 (RG) contributes to the NADPH binding site. The tract at residues 261–281 (INPYRSTEQDKPAHNNRMARQ) is disordered.

This sequence belongs to the GTP cyclohydrolase I family. QueF type 2 subfamily. In terms of assembly, homodimer.

It is found in the cytoplasm. The enzyme catalyses 7-aminomethyl-7-carbaguanine + 2 NADP(+) = 7-cyano-7-deazaguanine + 2 NADPH + 3 H(+). The protein operates within tRNA modification; tRNA-queuosine biosynthesis. Its function is as follows. Catalyzes the NADPH-dependent reduction of 7-cyano-7-deazaguanine (preQ0) to 7-aminomethyl-7-deazaguanine (preQ1). The chain is NADPH-dependent 7-cyano-7-deazaguanine reductase from Vibrio campbellii (strain ATCC BAA-1116).